The following is a 276-amino-acid chain: Phospholipid phosphatase 2 (276 aa).

Residues 1–4 are Cytoplasmic-facing; the sequence is MERR. The chain crosses the membrane as a helical span at residues 5 to 25; sequence WVFVLLDVLCVLVASLPFIIL. Residues 26–51 are Lumenal-facing; the sequence is TLVNAPYKRGFYCGDDSIRYPYRPDT. The helical transmembrane segment at 52–72 threads the bilayer; that stretch reads ITHGLMAGVIITATVVLVSSG. Over 73 to 87 the chain is Cytoplasmic; it reads EAYLVYTDRLYSRSD. Residues 88–108 traverse the membrane as a helical segment; the sequence is FNNYVAAIYKVLGTFLFGAAV. The Lumenal portion of the chain corresponds to 109–161; sequence SQSLTDLAKYMIGRLRPSFLAVCDPDWSRVNCSGYVQVEVCRGSPANVTEARL. A phosphatase sequence motif I region spans residues 117–125; that stretch reads KYMIGRLRP. Residues Asn139 and Asn155 are each glycosylated (N-linked (GlcNAc...) asparagine). A helical transmembrane segment spans residues 162–182; sequence SFYSGHSSFGMYCMLFLALYV. The tract at residues 164–167 is phosphatase sequence motif II; sequence YSGH. His167 acts as the Proton donors in catalysis. The Cytoplasmic segment spans residues 183–189; that stretch reads QARLCWK. The helical transmembrane segment at 190–210 threads the bilayer; that stretch reads WARLLRPTVQFFLVAFAIYVG. At 211–225 the chain is on the lumenal side; that stretch reads YTRVSDNKHHWSDVL. Positions 212–223 are phosphatase sequence motif III; it reads TRVSDNKHHWSD. Residue His219 is the Nucleophile of the active site. Residues 226–246 form a helical membrane-spanning segment; it reads VGLLQGALVACLTVCYVSDFF. The Cytoplasmic portion of the chain corresponds to 247–276; sequence KSRPPQSCQENEESERKPSLSLTLTLGDRP. Positions 252–276 are disordered; that stretch reads QSCQENEESERKPSLSLTLTLGDRP.

Belongs to the PA-phosphatase related phosphoesterase family. In terms of assembly, forms functional homodimers and homooligomers. Can also form heterooligomers with PLPP1 and PLPP3. In terms of processing, N-glycosylated. Expressed in the brain.

It is found in the membrane. Its subcellular location is the cell membrane. The protein localises to the early endosome membrane. It localises to the endoplasmic reticulum membrane. The catalysed reaction is a 1,2-diacyl-sn-glycero-3-phosphate + H2O = a 1,2-diacyl-sn-glycerol + phosphate. It carries out the reaction 1,2-dihexadecanoyl-sn-glycero-3-phosphate + H2O = 1,2-dihexadecanoyl-sn-glycerol + phosphate. The enzyme catalyses 1,2-di-(9Z-octadecenoyl)-sn-glycero-3-phosphate + H2O = 1,2-di-(9Z-octadecenoyl)-sn-glycerol + phosphate. It catalyses the reaction a monoacyl-sn-glycero-3-phosphate + H2O = a monoacylglycerol + phosphate. The catalysed reaction is (9Z)-octadecenoyl-sn-glycero-3-phosphate + H2O = (9Z-octadecenoyl)-glycerol + phosphate. It carries out the reaction sphing-4-enine 1-phosphate + H2O = sphing-4-enine + phosphate. The enzyme catalyses an N-acylsphing-4-enine 1-phosphate + H2O = an N-acylsphing-4-enine + phosphate. It catalyses the reaction N-(octanoyl)-sphing-4-enine-1-phosphate + H2O = N-octanoylsphing-4-enine + phosphate. The catalysed reaction is N-(9Z-octadecenoyl)-ethanolamine phosphate + H2O = N-(9Z-octadecenoyl) ethanolamine + phosphate. The protein operates within lipid metabolism; phospholipid metabolism. Its activity is regulated as follows. Magnesium-independent phospholipid phosphatase. Insensitive to N-ethylmaleimide. Its function is as follows. Magnesium-independent phospholipid phosphatase that catalyzes the dephosphorylation of a variety of glycerolipid and sphingolipid phosphate esters including phosphatidate/PA, lysophosphatidate/LPA, sphingosine 1-phosphate/S1P and ceramide 1-phosphate/C1P. Has no apparent extracellular phosphatase activity and therefore most probably acts intracellularly. Also acts on N-oleoyl ethanolamine phosphate/N-(9Z-octadecenoyl)-ethanolamine phosphate, a potential physiological compound. Through dephosphorylation of these bioactive lipid mediators produces new bioactive compounds and may regulate signal transduction in different cellular processes. Indirectly regulates, for instance, cell cycle G1/S phase transition through its phospholipid phosphatase activity. This Rattus norvegicus (Rat) protein is Phospholipid phosphatase 2.